A 50-amino-acid chain; its full sequence is Protein hunchback (50 aa).

3 consecutive C2H2-type zinc fingers follow at residues 1 to 5, 11 to 33, and 39 to 50; these read HLRNH, FKCG…MKSH, and YRCANCCYATKY.

This sequence belongs to the hunchback C2H2-type zinc-finger protein family.

It localises to the nucleus. Functionally, gap class segmentation protein that controls development of head structures. The chain is Protein hunchback (hb) from Pholcus phalangioides (Longbodied cellar spider).